The following is a 255-amino-acid chain: MSFNNQESENLPTFADQKRKTVEVAEFTAEGRYKRKVRSFVLRTGRLSEFQKNAMNQHWGFYGLEHQNQPFDFPAIYGNNNPVVLEIGFGMGHSLVDMALQNPERNYLGIEVHTPGVGACIAYAVEKGVKNLRIICHDATEILRDCIADHSLGGLQLFFPDPWHKAKHHKRRIVQPQFVNTITQKLTTGGFIHMATDWENYAEHMLAVLQQAEGLQNTSATHDYIPRPDFRPLTKFEQRGHRLGHGVWDLYYIKK.

S-adenosyl-L-methionine is bound by residues Glu-86, Glu-111, Asp-138, and Asp-161. Asp-161 is a catalytic residue. Substrate contacts are provided by residues Lys-165, Asp-197, and 234–237 (TKFE).

It belongs to the class I-like SAM-binding methyltransferase superfamily. TrmB family.

The catalysed reaction is guanosine(46) in tRNA + S-adenosyl-L-methionine = N(7)-methylguanosine(46) in tRNA + S-adenosyl-L-homocysteine. The protein operates within tRNA modification; N(7)-methylguanine-tRNA biosynthesis. Its function is as follows. Catalyzes the formation of N(7)-methylguanine at position 46 (m7G46) in tRNA. The chain is tRNA (guanine-N(7)-)-methyltransferase from Pasteurella multocida (strain Pm70).